The primary structure comprises 738 residues: Catalase-peroxidase 2 (738 aa).

The N-terminal stretch at 1–26 (MKRTLPTLSALALSMSLALAAGQTQA) is a signal peptide. The segment at residues 104–226 (WHSAGVYRIF…LGATQMGLIY (123 aa)) is a cross-link (tryptophyl-tyrosyl-methioninium (Trp-Tyr) (with M-252)). H105 acts as the Proton acceptor in catalysis. Residues 226-252 (YVNPEGPNGVPDPLAAARDIRETFGRM) constitute a cross-link (tryptophyl-tyrosyl-methioninium (Tyr-Met) (with W-104)). H267 is a heme b binding site.

Belongs to the peroxidase family. Peroxidase/catalase subfamily. As to quaternary structure, homodimer or homotetramer. The cofactor is heme b. Formation of the three residue Trp-Tyr-Met cross-link is important for the catalase, but not the peroxidase activity of the enzyme.

It carries out the reaction H2O2 + AH2 = A + 2 H2O. The enzyme catalyses 2 H2O2 = O2 + 2 H2O. In terms of biological role, bifunctional enzyme with both catalase and broad-spectrum peroxidase activity. The sequence is that of Catalase-peroxidase 2 from Shewanella amazonensis (strain ATCC BAA-1098 / SB2B).